The following is a 551-amino-acid chain: L-lactate permease (551 aa).

The next 12 membrane-spanning stretches (helical) occupy residues 13-33 (NIWLSSLIASLPILFFFFALI), 37-57 (LKGYVAASWTVAIALAVALLF), 70-90 (VYGFFYGLWPIAWIIIAAVFV), 131-151 (GAAGFGAPVAITAALLVGLGF), 159-179 (LCLIVNTAPVAFGAMGIPILV), 194-214 (MVGRQLPFMTIIVLFWIMAIM), 244-264 (FIGPELPDIISSLVSLLCLTL), 366-386 (FDWFSATGTAILFAALLSIVW), 405-425 (LALPIYSIGMVLAFAFISNYS), 438-458 (TGHAFTFFSPFLGWLGVFLTG), 494-514 (VTGKMISPQSIAIACAAVGLV), and 530-550 (IFTCMVGVITTLQAYVLTWMI).

The protein belongs to the lactate permease family.

Its subcellular location is the cell inner membrane. It catalyses the reaction (S)-lactate(in) + H(+)(in) = (S)-lactate(out) + H(+)(out). The enzyme catalyses (R)-lactate(in) + H(+)(in) = (R)-lactate(out) + H(+)(out). The catalysed reaction is glycolate(in) + H(+)(in) = glycolate(out) + H(+)(out). Functionally, uptake of L-lactate across the membrane. Can also transport D-lactate and glycolate. Seems to be driven by a proton motive force. The chain is L-lactate permease (lldP) from Escherichia coli O6:H1 (strain CFT073 / ATCC 700928 / UPEC).